A 222-amino-acid chain; its full sequence is dTTP/UTP pyrophosphatase (222 aa).

The active-site Proton acceptor is the D83.

This sequence belongs to the Maf family. YhdE subfamily. The cofactor is a divalent metal cation.

The protein localises to the cytoplasm. It carries out the reaction dTTP + H2O = dTMP + diphosphate + H(+). The enzyme catalyses UTP + H2O = UMP + diphosphate + H(+). Nucleoside triphosphate pyrophosphatase that hydrolyzes dTTP and UTP. May have a dual role in cell division arrest and in preventing the incorporation of modified nucleotides into cellular nucleic acids. This chain is dTTP/UTP pyrophosphatase, found in Desulfitobacterium hafniense (strain Y51).